Here is a 263-residue protein sequence, read N- to C-terminus: Small ribosomal subunit protein uS3 (263 aa).

In terms of domain architecture, KH type-2 spans 39 to 107 (VREYLKKKLK…PVHVNIEEIR (69 aa)). Residues 211 to 263 (GELPPEAATPREEERRPRRAPRGDRPDGGRPGRPGGRGRGPRKADAAPAPEGE) are disordered. The span at 219 to 240 (TPREEERRPRRAPRGDRPDGGR) shows a compositional bias: basic and acidic residues.

Belongs to the universal ribosomal protein uS3 family. Part of the 30S ribosomal subunit. Forms a tight complex with proteins S10 and S14.

Its function is as follows. Binds the lower part of the 30S subunit head. Binds mRNA in the 70S ribosome, positioning it for translation. The protein is Small ribosomal subunit protein uS3 of Bordetella petrii (strain ATCC BAA-461 / DSM 12804 / CCUG 43448).